The chain runs to 121 residues: Small ribosomal subunit protein uS13 (121 aa).

Positions 96 to 121 (PVRGQNTKNNARTRKGKAVAIAGKKK) are disordered. The segment covering 106 to 121 (ARTRKGKAVAIAGKKK) has biased composition (basic residues).

It belongs to the universal ribosomal protein uS13 family. As to quaternary structure, part of the 30S ribosomal subunit. Forms a loose heterodimer with protein S19. Forms two bridges to the 50S subunit in the 70S ribosome.

In terms of biological role, located at the top of the head of the 30S subunit, it contacts several helices of the 16S rRNA. In the 70S ribosome it contacts the 23S rRNA (bridge B1a) and protein L5 of the 50S subunit (bridge B1b), connecting the 2 subunits; these bridges are implicated in subunit movement. Contacts the tRNAs in the A and P-sites. The polypeptide is Small ribosomal subunit protein uS13 (Streptococcus agalactiae serotype Ia (strain ATCC 27591 / A909 / CDC SS700)).